The following is a 303-amino-acid chain: Methionyl-tRNA formyltransferase (303 aa).

108-111 lines the (6S)-5,6,7,8-tetrahydrofolate pocket; that stretch reads SDLP.

Belongs to the Fmt family.

It catalyses the reaction L-methionyl-tRNA(fMet) + (6R)-10-formyltetrahydrofolate = N-formyl-L-methionyl-tRNA(fMet) + (6S)-5,6,7,8-tetrahydrofolate + H(+). Functionally, attaches a formyl group to the free amino group of methionyl-tRNA(fMet). The formyl group appears to play a dual role in the initiator identity of N-formylmethionyl-tRNA by promoting its recognition by IF2 and preventing the misappropriation of this tRNA by the elongation apparatus. The protein is Methionyl-tRNA formyltransferase of Rickettsia rickettsii (strain Iowa).